We begin with the raw amino-acid sequence, 780 residues long: 5-methyltetrahydropteroyltriglutamate--homocysteine methyltransferase (780 aa).

5-methyltetrahydropteroyltri-L-glutamate-binding positions include 15 to 18 and Lys-114; that span reads RELK. L-homocysteine-binding positions include 457–459 and Glu-510; that span reads IGS. Residues 457–459 and Glu-510 each bind L-methionine; that span reads IGS. 5-methyltetrahydropteroyltri-L-glutamate contacts are provided by residues 541–542 and Trp-587; that span reads RC. L-homocysteine is bound at residue Asp-625. L-methionine is bound at residue Asp-625. Glu-631 contributes to the 5-methyltetrahydropteroyltri-L-glutamate binding site. Zn(2+)-binding residues include His-667, Cys-669, and Glu-691. His-720 serves as the catalytic Proton donor. Zn(2+) is bound at residue Cys-752.

This sequence belongs to the vitamin-B12 independent methionine synthase family. It depends on Zn(2+) as a cofactor.

The catalysed reaction is 5-methyltetrahydropteroyltri-L-glutamate + L-homocysteine = tetrahydropteroyltri-L-glutamate + L-methionine. Its pathway is amino-acid biosynthesis; L-methionine biosynthesis via de novo pathway; L-methionine from L-homocysteine (MetE route): step 1/1. In terms of biological role, catalyzes the transfer of a methyl group from 5-methyltetrahydrofolate to homocysteine resulting in methionine formation. The chain is 5-methyltetrahydropteroyltriglutamate--homocysteine methyltransferase from Nitratidesulfovibrio vulgaris (strain DSM 19637 / Miyazaki F) (Desulfovibrio vulgaris).